Here is a 209-residue protein sequence, read N- to C-terminus: NDR1/HIN1-like protein 1 (209 aa).

The chain crosses the membrane as a helical span at residues 18–38 (IFWSIIFVLFIIFLTILLIWA). N-linked (GlcNAc...) asparagine glycosylation occurs at Asn-58.

In terms of tissue distribution, expressed in rosette leaves, cauline leaves, stems, and siliques, and at lower levels in roots and flowers.

The protein localises to the cell membrane. May play a role in plant immunity. This Arabidopsis thaliana (Mouse-ear cress) protein is NDR1/HIN1-like protein 1.